The following is a 438-amino-acid chain: Trigger factor (438 aa).

One can recognise a PPIase FKBP-type domain in the interval 160-245; it reads DDKVTIDFVG…VKKIQQAELP (86 aa).

This sequence belongs to the FKBP-type PPIase family. Tig subfamily.

The protein resides in the cytoplasm. It carries out the reaction [protein]-peptidylproline (omega=180) = [protein]-peptidylproline (omega=0). Involved in protein export. Acts as a chaperone by maintaining the newly synthesized protein in an open conformation. Functions as a peptidyl-prolyl cis-trans isomerase. In Francisella tularensis subsp. novicida (strain U112), this protein is Trigger factor.